The chain runs to 500 residues: MDALLVEKVLLGLFVAAVLALVVAKLTGKRLRLPPGPAGAPIVGNWLQVGDDLNHRNLMALARRFGDILLLRMGVRNLVVVSSPDLAKEVLHTQGVEFGSRTRNVVFDIFTGKGQDMVFTVYGDHWRKMRRIMTVPFFTNKVVAQNRAGWEEEARLVVEDVRRDPAAATSGVVIRRRLQLMMYNDMFRIMFDRRFDSVDDPLFNKLKAFNAERSRLSQSFEYNYGDFIPVLRPFLRRYLARCHQLKSQRMKLFEDHFVQERKRVMEQTGEIRCAMDHILEAERKGEINHDNVLYIVENINVAAIETTLWSIEWGIAELVNHPSIQSKVREEMASVLGGAAVTEPDLERLPYLQAVVKETLRLRMAIPLLVPHMNLADGKLAGYDIPAESKILVNAWFLANDPKRWVRPDEFRPERFLEEEKAVEAHGNDFRFVPFGVGRRSCPGIILALPIIGITLGRLVQSFDLLPPPGMDKVDTTEKPGQFSNQILKHATVVCKPIDA.

The chain crosses the membrane as a helical span at residues 3–23 (ALLVEKVLLGLFVAAVLALVV). (E)-cinnamate-binding positions include 213 to 218 (RSRLSQ) and Ala302. Cys442 contributes to the heme binding site.

The protein belongs to the cytochrome P450 family. It depends on heme as a cofactor. In terms of tissue distribution, expressed in roots and leaves.

The protein localises to the membrane. It catalyses the reaction (E)-cinnamate + reduced [NADPH--hemoprotein reductase] + O2 = (E)-4-coumarate + oxidized [NADPH--hemoprotein reductase] + H2O + H(+). It functions in the pathway phenylpropanoid metabolism; trans-4-coumarate biosynthesis; trans-4-coumarate from trans-cinnamate: step 1/1. In terms of biological role, catalyzes the first oxidative step of the phenylpropanoid pathway in higher plants by transforming trans-cinnamate into p-coumarate. The compounds formed by this pathway are essential components for lignification, pollination, and defense against ultraviolet light, predators and pathogens. This is Trans-cinnamate 4-monooxygenase from Oryza sativa subsp. japonica (Rice).